Consider the following 270-residue polypeptide: Acyl-[acyl-carrier-protein]--UDP-N-acetylglucosamine O-acyltransferase (270 aa).

It belongs to the transferase hexapeptide repeat family. LpxA subfamily. In terms of assembly, homotrimer.

The protein resides in the cytoplasm. The catalysed reaction is a (3R)-hydroxyacyl-[ACP] + UDP-N-acetyl-alpha-D-glucosamine = a UDP-3-O-[(3R)-3-hydroxyacyl]-N-acetyl-alpha-D-glucosamine + holo-[ACP]. It participates in glycolipid biosynthesis; lipid IV(A) biosynthesis; lipid IV(A) from (3R)-3-hydroxytetradecanoyl-[acyl-carrier-protein] and UDP-N-acetyl-alpha-D-glucosamine: step 1/6. Involved in the biosynthesis of lipid A, a phosphorylated glycolipid that anchors the lipopolysaccharide to the outer membrane of the cell. This chain is Acyl-[acyl-carrier-protein]--UDP-N-acetylglucosamine O-acyltransferase, found in Helicobacter pylori (strain Shi470).